The following is a 284-amino-acid chain: Polyamine aminopropyltransferase (284 aa).

Residues 6-242 form the PABS domain; sequence KGWFTEVCKE…GWWSATLAGH (237 aa). An S-methyl-5'-thioadenosine-binding site is contributed by Q36. H67 and D91 together coordinate spermidine. S-methyl-5'-thioadenosine contacts are provided by residues E111 and 142–143; that span reads DG. Catalysis depends on D161, which acts as the Proton acceptor. Residue 161–164 coordinates spermidine; that stretch reads DSTD.

The protein belongs to the spermidine/spermine synthase family. As to quaternary structure, homodimer or homotetramer.

Its subcellular location is the cytoplasm. The enzyme catalyses S-adenosyl 3-(methylsulfanyl)propylamine + putrescine = S-methyl-5'-thioadenosine + spermidine + H(+). It participates in amine and polyamine biosynthesis; spermidine biosynthesis; spermidine from putrescine: step 1/1. Catalyzes the irreversible transfer of a propylamine group from the amino donor S-adenosylmethioninamine (decarboxy-AdoMet) to putrescine (1,4-diaminobutane) to yield spermidine. This Nitrosococcus oceani (strain ATCC 19707 / BCRC 17464 / JCM 30415 / NCIMB 11848 / C-107) protein is Polyamine aminopropyltransferase.